Here is a 75-residue protein sequence, read N- to C-terminus: UPF0729 protein C18orf32 homolog (75 aa).

The necessary for its localzation to the endoplasmic reticulum and lipid droplets stretch occupies residues 1 to 37; the sequence is MVCIPCIVIPVLLWVYKRFLEPVLYPIISPIISRFWR. Positions 43 to 65 are enriched in polar residues; it reads DTPQQKTSTAECNGAANGSTANG. The disordered stretch occupies residues 43–75; it reads DTPQQKTSTAECNGAANGSTANGPKTVADKKAD.

It belongs to the UPF0729 family.

The protein localises to the endoplasmic reticulum. It is found in the lipid droplet. This chain is UPF0729 protein C18orf32 homolog, found in Danio rerio (Zebrafish).